Reading from the N-terminus, the 136-residue chain is Ergosterol biosynthetic protein 28 (136 aa).

The next 4 membrane-spanning stretches (helical) occupy residues 18-34 (VVVSVAALFNTVQSFLT), 56-72 (FGIWTLLSAIVRFYCAY), 79-95 (VYFLCQCTYYLACFHFL), and 109-125 (GLLSPIVVSTVSIWFMA).

The protein belongs to the ERG28 family. Heterotetramer of erg25, erg26, erg27 and erg28. Erg28 acts as a scaffold to tether erg27 and other 4,4-demethylation-related enzymes, forming a demethylation enzyme complex, in the endoplasmic reticulum.

The protein localises to the endoplasmic reticulum membrane. The protein operates within steroid metabolism; ergosterol biosynthesis. Functionally, part of the third module of ergosterol biosynthesis pathway that includes by the late steps of the pathway. Erg28 has a role as a scaffold to help anchor the catalytic components of the C-4 demethylation complex erg25, erg26 and erg27 to the endoplasmic reticulum. The third module or late pathway involves the ergosterol synthesis itself through consecutive reactions that mainly occur in the endoplasmic reticulum (ER) membrane. Firstly, the squalene synthase erg9 catalyzes the condensation of 2 farnesyl pyrophosphate moieties to form squalene, which is the precursor of all steroids. Secondly, squalene is converted into lanosterol by the consecutive action of the squalene epoxidase erg1 and the lanosterol synthase erg7. The lanosterol 14-alpha-demethylase erg11/cyp1 catalyzes C14-demethylation of lanosterol to produce 4,4'-dimethyl cholesta-8,14,24-triene-3-beta-ol. In the next steps, a complex process involving various demethylation, reduction and desaturation reactions catalyzed by the C-14 reductase erg24 and the C-4 demethylation complex erg25-erg26-erg27 leads to the production of zymosterol. Erg28 likely functions in the C-4 demethylation complex reaction by tethering erg26 and Erg27 to the endoplasmic reticulum or to facilitate interaction between these proteins. Then, the sterol 24-C-methyltransferase erg6 catalyzes the methyl transfer from S-adenosyl-methionine to the C-24 of zymosterol to form fecosterol. The C-8 sterol isomerase erg2 catalyzes the reaction which results in unsaturation at C-7 in the B ring of sterols and thus converts fecosterol to episterol. The sterol-C5-desaturases erg31 and erg32 then catalyze the introduction of a C-5 double bond in the B ring to produce 5-dehydroepisterol. The C-22 sterol desaturase erg5 further converts 5-dehydroepisterol into ergosta-5,7,22,24(28)-tetraen-3beta-ol by forming the C-22(23) double bond in the sterol side chain. Finally, ergosta-5,7,22,24(28)-tetraen-3beta-ol is substrate of the C-24(28) sterol reductase erg4 to produce ergosterol. In the genus Schizosaccharomyces, a second route exists between lanosterol and fecosterol, via the methylation of lanosterol to eburicol by erg6, followed by C14-demethylation by erg11/cyp1 and C4-demethylation by the demethylation complex erg25-erg26-erg27. Extends the chronological lifespan when overexpressed. The sequence is that of Ergosterol biosynthetic protein 28 from Schizosaccharomyces pombe (strain 972 / ATCC 24843) (Fission yeast).